We begin with the raw amino-acid sequence, 376 residues long: MTKKLNPLEDPPTATSSDEDDVETSEAGEASDDSSSSEEDVPIKIRIKSPSATTAAAPPAKSTAVSTAADSDSGSETETDSDSESTNPPNSGSGKTIALNTVNLKKKEDPTSSSATLALPAMKSGTKRPASEAAATTSTKRVKKDEESVKKPGGFQRLWSEEDEILVLQGMIDFKADTGKSPYVDTNAFYDFLKKSISFEVSKNQFMDKIRSLRKKYIGKEGRNEPSFVKAHDKKAFELSKFIWGPKGIALDSNVKSNGVSKKSVAKKKIDSVKQELVFAGGSSTNGKKVEEDGGDDGCDWFDNSSLVRMIASLGVDEYYVKQQWSLVSVESKKIVEEKYKLLQAKELEFVLEKTKFLNEVASMFVEASKNKPLDT.

The segment at 1 to 150 is disordered; it reads MTKKLNPLED…RVKKDEESVK (150 aa). A compositionally biased stretch (acidic residues) spans 17 to 40; that stretch reads SDEDDVETSEAGEASDDSSSSEED. S49 is modified (phosphoserine). Residues 49 to 72 show a composition bias toward low complexity; sequence SPSATTAAAPPAKSTAVSTAADSD. The span at 73–83 shows a compositional bias: acidic residues; sequence SGSETETDSDS. Polar residues predominate over residues 87–103; that stretch reads NPPNSGSGKTIALNTVN.

Belongs to the GeBP family. As to quaternary structure, interacts with DEK3.

The sequence is that of Probable transcription factor At1g61730 from Arabidopsis thaliana (Mouse-ear cress).